A 131-amino-acid polypeptide reads, in one-letter code: Fluoride-specific ion channel FluC 2 (131 aa).

Helical transmembrane passes span 4-24 (IIQG…ARFW), 46-66 (VSGA…HGVF), 71-91 (PWLF…SFAL), and 105-125 (AISN…LGFA). Na(+) contacts are provided by Gly81 and Thr84.

This sequence belongs to the fluoride channel Fluc/FEX (TC 1.A.43) family.

Its subcellular location is the cell inner membrane. The enzyme catalyses fluoride(in) = fluoride(out). Its activity is regulated as follows. Na(+) is not transported, but it plays an essential structural role and its presence is essential for fluoride channel function. In terms of biological role, fluoride-specific ion channel. Important for reducing fluoride concentration in the cell, thus reducing its toxicity. The sequence is that of Fluoride-specific ion channel FluC 2 from Rhodopseudomonas palustris (strain BisB18).